We begin with the raw amino-acid sequence, 712 residues long: Phosphoribosylformylglycinamidine synthase subunit PurL (712 aa).

Residue H32 is part of the active site. Y35 is a binding site for ATP. E76 contacts Mg(2+). Substrate-binding positions include 77-80 (SHNH) and R99. H78 (proton acceptor) is an active-site residue. D100 is a Mg(2+) binding site. Residue Q223 participates in substrate binding. Position 251 (D251) interacts with Mg(2+). Residue 295–297 (ESQ) coordinates substrate. The ATP site is built by D470 and G507. N508 provides a ligand contact to Mg(2+). S510 contacts substrate.

Belongs to the FGAMS family. Monomer. Part of the FGAM synthase complex composed of 1 PurL, 1 PurQ and 2 PurS subunits.

The protein localises to the cytoplasm. It carries out the reaction N(2)-formyl-N(1)-(5-phospho-beta-D-ribosyl)glycinamide + L-glutamine + ATP + H2O = 2-formamido-N(1)-(5-O-phospho-beta-D-ribosyl)acetamidine + L-glutamate + ADP + phosphate + H(+). Its pathway is purine metabolism; IMP biosynthesis via de novo pathway; 5-amino-1-(5-phospho-D-ribosyl)imidazole from N(2)-formyl-N(1)-(5-phospho-D-ribosyl)glycinamide: step 1/2. Its function is as follows. Part of the phosphoribosylformylglycinamidine synthase complex involved in the purines biosynthetic pathway. Catalyzes the ATP-dependent conversion of formylglycinamide ribonucleotide (FGAR) and glutamine to yield formylglycinamidine ribonucleotide (FGAM) and glutamate. The FGAM synthase complex is composed of three subunits. PurQ produces an ammonia molecule by converting glutamine to glutamate. PurL transfers the ammonia molecule to FGAR to form FGAM in an ATP-dependent manner. PurS interacts with PurQ and PurL and is thought to assist in the transfer of the ammonia molecule from PurQ to PurL. This is Phosphoribosylformylglycinamidine synthase subunit PurL from Thermococcus gammatolerans (strain DSM 15229 / JCM 11827 / EJ3).